A 611-amino-acid polypeptide reads, in one-letter code: 1,4-alpha-glucan branching enzyme GlgB (611 aa).

Asp-302 serves as the catalytic Nucleophile. Glu-343 (proton donor) is an active-site residue.

The protein belongs to the glycosyl hydrolase 13 family. GlgB subfamily. Monomer.

The catalysed reaction is Transfers a segment of a (1-&gt;4)-alpha-D-glucan chain to a primary hydroxy group in a similar glucan chain.. It participates in glycan biosynthesis; glycogen biosynthesis. Functionally, catalyzes the formation of the alpha-1,6-glucosidic linkages in glycogen by scission of a 1,4-alpha-linked oligosaccharide from growing alpha-1,4-glucan chains and the subsequent attachment of the oligosaccharide to the alpha-1,6 position. This chain is 1,4-alpha-glucan branching enzyme GlgB, found in Fusobacterium nucleatum subsp. nucleatum (strain ATCC 25586 / DSM 15643 / BCRC 10681 / CIP 101130 / JCM 8532 / KCTC 2640 / LMG 13131 / VPI 4355).